We begin with the raw amino-acid sequence, 279 residues long: Eukaryotic translation initiation factor 3 subunit G (279 aa).

Disordered stretches follow at residues Met1 to Pro26, Arg66 to Glu115, and Thr152 to Ala171. Phosphoserine is present on Ser78. Residues Lys102–Glu115 show a composition bias toward basic and acidic residues. Residues Thr152–Glu163 are compositionally biased toward low complexity. The 80-residue stretch at Thr197–Lys276 folds into the RRM domain.

Belongs to the eIF-3 subunit G family. As to quaternary structure, component of the eukaryotic translation initiation factor 3 (eIF-3) complex.

It localises to the cytoplasm. RNA-binding component of the eukaryotic translation initiation factor 3 (eIF-3) complex, which is involved in protein synthesis of a specialized repertoire of mRNAs and, together with other initiation factors, stimulates binding of mRNA and methionyl-tRNAi to the 40S ribosome. The eIF-3 complex specifically targets and initiates translation of a subset of mRNAs involved in cell proliferation. This subunit can bind 18S rRNA. The chain is Eukaryotic translation initiation factor 3 subunit G from Candida albicans (strain SC5314 / ATCC MYA-2876) (Yeast).